A 159-amino-acid chain; its full sequence is 2-C-methyl-D-erythritol 2,4-cyclodiphosphate synthase (159 aa).

Residues D8 and H10 each coordinate a divalent metal cation. 4-CDP-2-C-methyl-D-erythritol 2-phosphate-binding positions include 8-10 (DVH) and 34-35 (HS). H42 contacts a divalent metal cation. Residues 56-58 (DIG), 61-65 (FPDTD), 100-106 (AQEPKMA), 132-135 (TTTE), F139, and R142 contribute to the 4-CDP-2-C-methyl-D-erythritol 2-phosphate site.

It belongs to the IspF family. As to quaternary structure, homotrimer. Requires a divalent metal cation as cofactor.

The catalysed reaction is 4-CDP-2-C-methyl-D-erythritol 2-phosphate = 2-C-methyl-D-erythritol 2,4-cyclic diphosphate + CMP. Its pathway is isoprenoid biosynthesis; isopentenyl diphosphate biosynthesis via DXP pathway; isopentenyl diphosphate from 1-deoxy-D-xylulose 5-phosphate: step 4/6. Functionally, involved in the biosynthesis of isopentenyl diphosphate (IPP) and dimethylallyl diphosphate (DMAPP), two major building blocks of isoprenoid compounds. Catalyzes the conversion of 4-diphosphocytidyl-2-C-methyl-D-erythritol 2-phosphate (CDP-ME2P) to 2-C-methyl-D-erythritol 2,4-cyclodiphosphate (ME-CPP) with a corresponding release of cytidine 5-monophosphate (CMP). This chain is 2-C-methyl-D-erythritol 2,4-cyclodiphosphate synthase, found in Alkaliphilus metalliredigens (strain QYMF).